Here is a 464-residue protein sequence, read N- to C-terminus: Siroheme synthase (464 aa).

The interval 1–203 (MDYLPLFHKL…GQGAEAERLL (203 aa)) is precorrin-2 dehydrogenase /sirohydrochlorin ferrochelatase. NAD(+) contacts are provided by residues 22–23 (EI) and 43–44 (PE). S128 carries the post-translational modification Phosphoserine. Residues 216 to 464 (GEVYLVGAGP…AWFEGSQQDQ (249 aa)) form a uroporphyrinogen-III C-methyltransferase region. P225 contacts S-adenosyl-L-methionine. D248 serves as the catalytic Proton acceptor. K270 acts as the Proton donor in catalysis. S-adenosyl-L-methionine contacts are provided by residues 301–303 (GGD), I306, 331–332 (TA), M383, and G412.

It in the N-terminal section; belongs to the precorrin-2 dehydrogenase / sirohydrochlorin ferrochelatase family. This sequence in the C-terminal section; belongs to the precorrin methyltransferase family.

It carries out the reaction uroporphyrinogen III + 2 S-adenosyl-L-methionine = precorrin-2 + 2 S-adenosyl-L-homocysteine + H(+). The enzyme catalyses precorrin-2 + NAD(+) = sirohydrochlorin + NADH + 2 H(+). It catalyses the reaction siroheme + 2 H(+) = sirohydrochlorin + Fe(2+). It functions in the pathway cofactor biosynthesis; adenosylcobalamin biosynthesis; precorrin-2 from uroporphyrinogen III: step 1/1. Its pathway is cofactor biosynthesis; adenosylcobalamin biosynthesis; sirohydrochlorin from precorrin-2: step 1/1. The protein operates within porphyrin-containing compound metabolism; siroheme biosynthesis; precorrin-2 from uroporphyrinogen III: step 1/1. It participates in porphyrin-containing compound metabolism; siroheme biosynthesis; siroheme from sirohydrochlorin: step 1/1. It functions in the pathway porphyrin-containing compound metabolism; siroheme biosynthesis; sirohydrochlorin from precorrin-2: step 1/1. In terms of biological role, multifunctional enzyme that catalyzes the SAM-dependent methylations of uroporphyrinogen III at position C-2 and C-7 to form precorrin-2 via precorrin-1. Then it catalyzes the NAD-dependent ring dehydrogenation of precorrin-2 to yield sirohydrochlorin. Finally, it catalyzes the ferrochelation of sirohydrochlorin to yield siroheme. The polypeptide is Siroheme synthase (Pseudomonas putida (strain W619)).